We begin with the raw amino-acid sequence, 809 residues long: Leucine--tRNA ligase (809 aa).

Residues Pro40–His50 carry the 'HIGH' region motif. The 'KMSKS' region signature appears at Lys579–Ser583. Lys582 serves as a coordination point for ATP.

The protein belongs to the class-I aminoacyl-tRNA synthetase family.

It localises to the cytoplasm. The enzyme catalyses tRNA(Leu) + L-leucine + ATP = L-leucyl-tRNA(Leu) + AMP + diphosphate. The polypeptide is Leucine--tRNA ligase (Campylobacter jejuni subsp. jejuni serotype O:23/36 (strain 81-176)).